Here is a 365-residue protein sequence, read N- to C-terminus: ADP-ribosylhydrolase ARH3 (365 aa).

Mg(2+)-binding residues include Glu-42, Thr-77, Asp-78, and Asp-79. Asp-78 contacts substrate. Substrate is bound by residues 147–153, His-183, Leu-236, and Ile-272; that span reads KGSYGNG. The Mg(2+) site is built by Asp-315, Asp-317, and Thr-318.

Belongs to the ADP-ribosylglycohydrolase family. In terms of assembly, monomer. Mg(2+) serves as cofactor.

It is found in the nucleus. Its subcellular location is the cytoplasm. It localises to the chromosome. The protein localises to the mitochondrion matrix. The enzyme catalyses [(1''-&gt;2')-ADP-alpha-D-ribose](n) + H2O = [(1''-&gt;2')-ADP-alpha-D-ribose](n-1) + ADP-D-ribose. It carries out the reaction 1''-O-acetyl-ADP-alpha-D-ribose + H2O = ADP-D-ribose + acetate + H(+). It catalyses the reaction O-(ADP-D-ribosyl)-L-seryl-[protein] + H2O = ADP-D-ribose + L-seryl-[protein]. The catalysed reaction is alpha-NAD(+) + H2O = ADP-D-ribose + nicotinamide + H(+). The protein undergoes a dramatic conformational switch from closed to open states upon substrate-binding, which enables specific substrate recognition for the 1''-O-linkage. The glutamate flap (Glu-42) blocks substrate entrance to Mg(2+) in the unliganded closed state. In presence of substrate, Glu-42 is ejected from the active site: this closed-to-open transition significantly widens the substrate-binding channel and precisely positions the scissile 1''-O-linkage for cleavage while securing tightly 2'- and 3'-hydroxyls of ADP-ribose. In terms of biological role, ADP-ribosylhydrolase that preferentially hydrolyzes the scissile alpha-O-linkage attached to the anomeric C1'' position of ADP-ribose and acts on different substrates, such as proteins ADP-ribosylated on serine and threonine, free poly(ADP-ribose) and O-acetyl-ADP-D-ribose. Specifically acts as a serine mono-ADP-ribosylhydrolase by mediating the removal of mono-ADP-ribose attached to serine residues on proteins, thereby playing a key role in DNA damage response. Serine ADP-ribosylation of proteins constitutes the primary form of ADP-ribosylation of proteins in response to DNA damage. Does not hydrolyze ADP-ribosyl-arginine, -cysteine, -diphthamide, or -asparagine bonds. Also able to degrade protein free poly(ADP-ribose), which is synthesized in response to DNA damage: free poly(ADP-ribose) acts as a potent cell death signal and its degradation by ADPRHL2 protects cells from poly(ADP-ribose)-dependent cell death, a process named parthanatos. Also hydrolyzes free poly(ADP-ribose) in mitochondria. Specifically digests O-acetyl-ADP-D-ribose, a product of deacetylation reactions catalyzed by sirtuins. Specifically degrades 1''-O-acetyl-ADP-D-ribose isomer, rather than 2''-O-acetyl-ADP-D-ribose or 3''-O-acetyl-ADP-D-ribose isomers. This Bos taurus (Bovine) protein is ADP-ribosylhydrolase ARH3 (ADPRS).